Reading from the N-terminus, the 126-residue chain is Protein Wnt-7(II) (126 aa).

A lipid anchor (O-palmitoleoyl serine; by PORCN) is attached at serine 1. A disulfide bridge links cysteine 92 with cysteine 107. Residue asparagine 93 is glycosylated (N-linked (GlcNAc...) asparagine).

Belongs to the Wnt family. Palmitoleoylation is required for efficient binding to frizzled receptors. Depalmitoleoylation leads to Wnt signaling pathway inhibition.

It localises to the secreted. Its subcellular location is the extracellular space. The protein localises to the extracellular matrix. Ligand for members of the frizzled family of seven transmembrane receptors. Probable developmental protein. May be a signaling molecule which affects the development of discrete regions of tissues. Is likely to signal over only few cell diameters. This chain is Protein Wnt-7(II) (WNT-7(II)), found in Eptatretus stoutii (Pacific hagfish).